Here is a 193-residue protein sequence, read N- to C-terminus: Phosphoheptose isomerase (193 aa).

Residues 37 to 193 form the SIS domain; sequence LADSFKVGGK…QLIEKEMVKA (157 aa). 52–54 serves as a coordination point for substrate; it reads NGG. Positions 61 and 65 each coordinate Zn(2+). Residues E65, 93–94, 119–121, S124, and Q172 each bind substrate; these read ND and STS. Zn(2+) contacts are provided by Q172 and H180.

Belongs to the SIS family. GmhA subfamily. As to quaternary structure, homotetramer. Zn(2+) is required as a cofactor.

It localises to the cytoplasm. It catalyses the reaction 2 D-sedoheptulose 7-phosphate = D-glycero-alpha-D-manno-heptose 7-phosphate + D-glycero-beta-D-manno-heptose 7-phosphate. It participates in carbohydrate biosynthesis; D-glycero-D-manno-heptose 7-phosphate biosynthesis; D-glycero-alpha-D-manno-heptose 7-phosphate and D-glycero-beta-D-manno-heptose 7-phosphate from sedoheptulose 7-phosphate: step 1/1. It functions in the pathway bacterial outer membrane biogenesis; LPS core biosynthesis. Catalyzes the isomerization of sedoheptulose 7-phosphate in D-glycero-D-manno-heptose 7-phosphate. In Photorhabdus laumondii subsp. laumondii (strain DSM 15139 / CIP 105565 / TT01) (Photorhabdus luminescens subsp. laumondii), this protein is Phosphoheptose isomerase.